Reading from the N-terminus, the 167-residue chain is Lipoprotein signal peptidase (167 aa).

A run of 4 helical transmembrane segments spans residues 8 to 28, 46 to 66, 68 to 88, and 101 to 121; these read TFLT…VVLL, WGHF…FGLF, QYKI…ALFL, and IALT…LLHG. Residues Asp-125 and Asp-143 contribute to the active site. The helical transmembrane segment at 139-159 threads the bilayer; it reads FNLADAFISIGTLLLIGHLYF.

It belongs to the peptidase A8 family.

Its subcellular location is the cell inner membrane. The catalysed reaction is Release of signal peptides from bacterial membrane prolipoproteins. Hydrolyzes -Xaa-Yaa-Zaa-|-(S,diacylglyceryl)Cys-, in which Xaa is hydrophobic (preferably Leu), and Yaa (Ala or Ser) and Zaa (Gly or Ala) have small, neutral side chains.. It participates in protein modification; lipoprotein biosynthesis (signal peptide cleavage). In terms of biological role, this protein specifically catalyzes the removal of signal peptides from prolipoproteins. The chain is Lipoprotein signal peptidase from Chlamydia trachomatis serovar L2b (strain UCH-1/proctitis).